Here is a 303-residue protein sequence, read N- to C-terminus: Lipoyl synthase (303 aa).

[4Fe-4S] cluster-binding residues include C35, C40, C46, C61, C65, C68, and S273. Positions F47–R262 constitute a Radical SAM core domain.

Belongs to the radical SAM superfamily. Lipoyl synthase family. [4Fe-4S] cluster serves as cofactor.

It localises to the cytoplasm. It carries out the reaction [[Fe-S] cluster scaffold protein carrying a second [4Fe-4S](2+) cluster] + N(6)-octanoyl-L-lysyl-[protein] + 2 oxidized [2Fe-2S]-[ferredoxin] + 2 S-adenosyl-L-methionine + 4 H(+) = [[Fe-S] cluster scaffold protein] + N(6)-[(R)-dihydrolipoyl]-L-lysyl-[protein] + 4 Fe(3+) + 2 hydrogen sulfide + 2 5'-deoxyadenosine + 2 L-methionine + 2 reduced [2Fe-2S]-[ferredoxin]. The protein operates within protein modification; protein lipoylation via endogenous pathway; protein N(6)-(lipoyl)lysine from octanoyl-[acyl-carrier-protein]: step 2/2. Catalyzes the radical-mediated insertion of two sulfur atoms into the C-6 and C-8 positions of the octanoyl moiety bound to the lipoyl domains of lipoate-dependent enzymes, thereby converting the octanoylated domains into lipoylated derivatives. The protein is Lipoyl synthase of Geobacter sulfurreducens (strain ATCC 51573 / DSM 12127 / PCA).